A 220-amino-acid polypeptide reads, in one-letter code: Tumor protein D54 (220 aa).

An N-acetylmethionine modification is found at M1. S3, S12, and S19 each carry phosphoserine. Positions 40-82 (GLTEGEEEELRAELAKVEEEIVTLRQVLAAKERHCGELKRRLG) form a coiled coil. A phosphoserine mark is found at S96, S149, S168, and S175. The residue at position 177 (T177) is a Phosphothreonine. Position 180 is a phosphoserine (S180). T187 is modified (phosphothreonine). A disordered region spans residues 189 to 220 (KSKVVGGRENGSDNLPPSPGSGDQTLPDHAPF). Residues S206 and S209 each carry the phosphoserine modification.

Belongs to the TPD52 family. Forms a homodimer or heterodimer with other members of the family. Interacts with MAL2.

The polypeptide is Tumor protein D54 (Tpd52l2) (Mus musculus (Mouse)).